A 603-amino-acid chain; its full sequence is Aspartate--tRNA(Asp/Asn) ligase (603 aa).

An L-aspartate-binding site is contributed by Glu172. Residues 196-199 (QLFK) form an aspartate region. Arg218 is a binding site for L-aspartate. ATP-binding positions include 218–220 (RDE) and Gln227. His457 provides a ligand contact to L-aspartate. Glu491 contacts ATP. Arg498 provides a ligand contact to L-aspartate. 543 to 546 (GLDR) is a binding site for ATP.

It belongs to the class-II aminoacyl-tRNA synthetase family. Type 1 subfamily. Homodimer.

The protein localises to the cytoplasm. The catalysed reaction is tRNA(Asx) + L-aspartate + ATP = L-aspartyl-tRNA(Asx) + AMP + diphosphate. Aspartyl-tRNA synthetase with relaxed tRNA specificity since it is able to aspartylate not only its cognate tRNA(Asp) but also tRNA(Asn). Reaction proceeds in two steps: L-aspartate is first activated by ATP to form Asp-AMP and then transferred to the acceptor end of tRNA(Asp/Asn). The chain is Aspartate--tRNA(Asp/Asn) ligase from Laribacter hongkongensis (strain HLHK9).